The sequence spans 60 residues: DNA-directed RNA polymerase subunit Rpo6 (60 aa).

The protein belongs to the archaeal Rpo6/eukaryotic RPB6 RNA polymerase subunit family. Part of the RNA polymerase complex.

Its subcellular location is the cytoplasm. The enzyme catalyses RNA(n) + a ribonucleoside 5'-triphosphate = RNA(n+1) + diphosphate. In terms of biological role, DNA-dependent RNA polymerase (RNAP) catalyzes the transcription of DNA into RNA using the four ribonucleoside triphosphates as substrates. This chain is DNA-directed RNA polymerase subunit Rpo6, found in Methanothrix thermoacetophila (strain DSM 6194 / JCM 14653 / NBRC 101360 / PT) (Methanosaeta thermophila).